A 379-amino-acid chain; its full sequence is METCPVLQKETLFHTEVYAYRIPALLYLKKQKTLLAFAEKRASRTDEHAELIVLRRGSYNGATNHVKWQPEEVVTQAQLEGHRSMNPCPLYDKQTKTLFLFFIAVPGRVSEQHQLQTRVNVTRLCRVTSTDYGMNWSPVQDLTETTIGSTHQDWATFAVGPGHCLQLRNRAGSLLVPAYAYRKLHPVHKPTPFAFCFISLDHGHTWELGNFVSENSLECQVAEVGTGAHRVVYLNARSFIGARVQAQSPNDGLDFQDNQVVSKLVEPPHGCHGSVVAFHSPTSKPDCLRHVAAYTHPTDSRNRTNLGVYLNQTPLDPTAWSEPTLLATGTCAYSDLQIWGLGPDGSPQFGCLYESGNYDEIIFLMFTLKQAFPTVHGAQ.

Residues 20–23 carry the FRIP motif motif; that stretch reads YRIP. Residues Arg-21 and Arg-41 each coordinate substrate. Residue Asp-46 is the Proton acceptor of the active site. Residues 127-138 form a BNR 1 repeat; sequence VTSTDYGMNWSP. Substrate is bound by residues Tyr-179 and Tyr-181. A BNR 2 repeat occupies 197 to 208; sequence FISLDHGHTWEL. The substrate site is built by Glu-218, Arg-237, and Arg-303. Tyr-333 serves as the catalytic Nucleophile. The active site involves Glu-354.

The protein belongs to the glycosyl hydrolase 33 family. As to expression, detected in skeletal muscle.

Its subcellular location is the cytoplasm. It localises to the cytosol. It catalyses the reaction Hydrolysis of alpha-(2-&gt;3)-, alpha-(2-&gt;6)-, alpha-(2-&gt;8)- glycosidic linkages of terminal sialic acid residues in oligosaccharides, glycoproteins, glycolipids, colominic acid and synthetic substrates.. The catalysed reaction is a ganglioside GD1a + H2O = a ganglioside GM1 + N-acetylneuraminate. The enzyme catalyses a ganglioside GM1 + H2O = a ganglioside GA1 + N-acetylneuraminate. It carries out the reaction a ganglioside GT1b + H2O = a ganglioside GD1b + N-acetylneuraminate. It catalyses the reaction a ganglioside GD1b + H2O = a ganglioside GM1 + N-acetylneuraminate. The catalysed reaction is a ganglioside GD3 + H2O = a ganglioside GM3 + N-acetylneuraminate. The enzyme catalyses a ganglioside GM3 + H2O = a beta-D-galactosyl-(1-&gt;4)-beta-D-glucosyl-(1&lt;-&gt;1)-ceramide + N-acetylneuraminate. It carries out the reaction a ganglioside GM2 + H2O = a ganglioside GA2 + N-acetylneuraminate. It catalyses the reaction a neolactoside IV(3)-alpha-NeuAc-nLc4Cer(d18:1(4E)) + H2O = a neolactoside nLc4Cer(d18:1(4E)) + N-acetylneuraminate. The catalysed reaction is N-acetyl-alpha-neuraminosyl-(2-&gt;3)-beta-D-galactosyl-(1-&gt;4)-D-glucose + H2O = lactose + N-acetylneuraminate. Its function is as follows. Exo-alpha-sialidase that catalyzes the hydrolytic cleavage of the terminal sialic acid (N-acetylneuraminic acid, Neu5Ac) of a glycan moiety in the catabolism of glycolipids, glycoproteins and oligosacharides. Recognizes sialyl linkage positions of the glycan moiety as well as the supramolecular organization of the sialoglycoconjugate. Displays preference for alpha-(2-&gt;3)-sialylated GD1a and GT1B gangliosides over alpha-(2-&gt;8)-sialylated GD1b, in both monomeric forms and micelles. Hydrolyzes monomeric GM1 ganglioside, but has no activity toward the miscellar form. Has lower sialidase activity for glycoproteins such as fetuin and TF/transferrin that carry a mixture of alpha-(2-&gt;3) and alpha-(2-&gt;6)-sialyl linkages. Cleaves milk oligosaccharide alpha-(2-&gt;3)-sialyllactose, but is inactive toward alpha-(2-&gt;6)-sialyllactose isomer. Has no activity toward colominic acid, a homomer of alpha-(2-&gt;8)-linked Neu5Ac residues. This is Sialidase-2 (Neu2) from Rattus norvegicus (Rat).